Reading from the N-terminus, the 628-residue chain is Chaperone protein HtpG (628 aa).

Residues 1-333 (MTTDTKATET…SADLPLNVSR (333 aa)) are a; substrate-binding. The tract at residues 334–549 (EMIQESPLLA…EHGPDRQFER (216 aa)) is b. A c region spans residues 550–628 (LMNAAGRLDK…RLIARGIAKG (79 aa)).

This sequence belongs to the heat shock protein 90 family. In terms of assembly, homodimer.

Its subcellular location is the cytoplasm. Its function is as follows. Molecular chaperone. Has ATPase activity. This chain is Chaperone protein HtpG, found in Mesorhizobium japonicum (strain LMG 29417 / CECT 9101 / MAFF 303099) (Mesorhizobium loti (strain MAFF 303099)).